The following is a 616-amino-acid chain: Protein translocase subunit SecD (616 aa).

A run of 6 helical transmembrane segments spans residues leucine 11 to glutamate 31, glutamine 453 to tyrosine 473, methionine 475 to methionine 495, isoleucine 497 to methionine 517, tyrosine 547 to tyrosine 569, and leucine 585 to leucine 605.

Belongs to the SecD/SecF family. SecD subfamily. In terms of assembly, forms a complex with SecF. Part of the essential Sec protein translocation apparatus which comprises SecA, SecYEG and auxiliary proteins SecDF-YajC and YidC.

Its subcellular location is the cell inner membrane. Its function is as follows. Part of the Sec protein translocase complex. Interacts with the SecYEG preprotein conducting channel. SecDF uses the proton motive force (PMF) to complete protein translocation after the ATP-dependent function of SecA. This is Protein translocase subunit SecD from Haemophilus influenzae (strain ATCC 51907 / DSM 11121 / KW20 / Rd).